Reading from the N-terminus, the 171-residue chain is Phosphopantetheine adenylyltransferase (171 aa).

Threonine 10 provides a ligand contact to substrate. ATP contacts are provided by residues 10-11 (TF) and histidine 18. 3 residues coordinate substrate: lysine 42, threonine 74, and arginine 88. ATP-binding positions include 89 to 91 (GLR), glutamate 99, and 124 to 130 (WACLSSK).

This sequence belongs to the bacterial CoaD family. As to quaternary structure, homohexamer. Requires Mg(2+) as cofactor.

It is found in the cytoplasm. It catalyses the reaction (R)-4'-phosphopantetheine + ATP + H(+) = 3'-dephospho-CoA + diphosphate. It participates in cofactor biosynthesis; coenzyme A biosynthesis; CoA from (R)-pantothenate: step 4/5. In terms of biological role, reversibly transfers an adenylyl group from ATP to 4'-phosphopantetheine, yielding dephospho-CoA (dPCoA) and pyrophosphate. In Blochmanniella pennsylvanica (strain BPEN), this protein is Phosphopantetheine adenylyltransferase.